We begin with the raw amino-acid sequence, 276 residues long: Rhomboid protease GlpG (276 aa).

Transmembrane regions (helical) follow at residues 94–114 (GPVTWIVMIACVLVYIAMSLI), 142–162 (IFMHFSLMHILFNLLWWWYLG), 169–189 (LGSGKLIVITVVSALLSGYVQ), 192–212 (FSGPWFGGLSGVVYALMGYVW), 229–249 (LIIFALLWIVAGWFDWFGMSM), and 250–270 (ANGAHIAGLIVGLAMAFVDTL). The Nucleophile role is filled by S201. The active site involves H254.

The protein belongs to the peptidase S54 family.

It is found in the cell inner membrane. It carries out the reaction Cleaves type-1 transmembrane domains using a catalytic dyad composed of serine and histidine that are contributed by different transmembrane domains.. Functionally, rhomboid-type serine protease that catalyzes intramembrane proteolysis. This Salmonella choleraesuis (strain SC-B67) protein is Rhomboid protease GlpG.